Here is an 862-residue protein sequence, read N- to C-terminus: ATP-dependent helicase Lhr-Core (862 aa).

8 residues coordinate ATP: glutamine 37, lysine 60, threonine 61, aspartate 178, glutamate 179, valine 360, arginine 377, and histidine 380. The 193-residue stretch at 41 to 233 (IMDIHRGRNV…FLVGYSYGSE (193 aa)) folds into the Helicase ATP-binding domain. Residues 178-181 (DEIH) carry the DEAH box motif. The Helicase C-terminal domain maps to 269–424 (ALYDILHDLI…SIKVPENCLD (156 aa)). A WH domain region spans residues 425-513 (VLAQHIYGMA…LYSTNIGTIP (89 aa)). Residues 514–862 (DRSAAVVKCG…HQAIIDEIKR (349 aa)) are domain 4.

Belongs to the Lhr helicase family. Lhr-Core subfamily. As to quaternary structure, monomer.

It carries out the reaction Couples ATP hydrolysis with the unwinding of duplex DNA by translocating in the 3'-5' direction.. The catalysed reaction is ATP + H2O = ADP + phosphate + H(+). Its function is as follows. DNA helicase that translocates in a 3'-5' direction on single-stranded (ss)DNA, probably involved in DNA repair. Most active on three- or four-stranded forked DNA; flayed structures and Holliday junction (HJ) substrates are unwound slightly less well. Also unwinds 3'-tailed duplexes; both RNA:DNA hybrids and double-stranded (ds)DNA with a 3'-single strand (ss)DNA loading strand are unwound. Substrates where the helicase loads on a 3'-ssRNA tail (DNA:RNA and RNA:RNA) were not tested. Blunt-ended dsDNA is not a substrate. Probably involved in replication-coupled DNA repair; remodeling of fork DNA after binding by Lhr generates ssDNA for ATP-dependent DNA translocation. The chain is ATP-dependent helicase Lhr-Core from Methanothermobacter thermautotrophicus (strain ATCC 29096 / DSM 1053 / JCM 10044 / NBRC 100330 / Delta H) (Methanobacterium thermoautotrophicum).